The following is a 548-amino-acid chain: Chaperonin GroEL (548 aa).

Residues 30-33, Lys-51, 87-91, Gly-415, 479-481, and Asp-495 contribute to the ATP site; these read TLGP, DGTTT, and NAA.

Belongs to the chaperonin (HSP60) family. Forms a cylinder of 14 subunits composed of two heptameric rings stacked back-to-back. Interacts with the co-chaperonin GroES.

It is found in the cytoplasm. It catalyses the reaction ATP + H2O + a folded polypeptide = ADP + phosphate + an unfolded polypeptide.. Functionally, together with its co-chaperonin GroES, plays an essential role in assisting protein folding. The GroEL-GroES system forms a nano-cage that allows encapsulation of the non-native substrate proteins and provides a physical environment optimized to promote and accelerate protein folding. This Klebsiella aerogenes (strain ATCC 13048 / DSM 30053 / CCUG 1429 / JCM 1235 / KCTC 2190 / NBRC 13534 / NCIMB 10102 / NCTC 10006 / CDC 819-56) (Enterobacter aerogenes) protein is Chaperonin GroEL.